The following is a 220-amino-acid chain: Probable GTP-binding protein EngB (220 aa).

The EngB-type G domain occupies 31-205; sequence AGVEIAFAGR…LGILNEWCHP (175 aa). Residues 39–46, 66–70, 84–87, 151–154, and 184–186 each bind GTP; these read GRSNAGKS, GRTQL, DLPG, TKAD, and FSS. Ser46 and Thr68 together coordinate Mg(2+).

The protein belongs to the TRAFAC class TrmE-Era-EngA-EngB-Septin-like GTPase superfamily. EngB GTPase family. It depends on Mg(2+) as a cofactor.

Functionally, necessary for normal cell division and for the maintenance of normal septation. The chain is Probable GTP-binding protein EngB from Shewanella sediminis (strain HAW-EB3).